A 342-amino-acid polypeptide reads, in one-letter code: Ketol-acid reductoisomerase (NADP(+)) (342 aa).

In terms of domain architecture, KARI N-terminal Rossmann spans valine 2 to threonine 181. NADP(+) contacts are provided by residues tyrosine 25–glutamine 28, arginine 48, serine 52, and aspartate 82–glutamine 85. Residue histidine 107 is part of the active site. Glycine 133 lines the NADP(+) pocket. In terms of domain architecture, KARI C-terminal knotted spans threonine 182 to valine 327. Mg(2+) is bound by residues aspartate 190, glutamate 194, glutamate 226, and glutamate 230. Serine 251 is a binding site for substrate.

It belongs to the ketol-acid reductoisomerase family. Mg(2+) is required as a cofactor.

The catalysed reaction is (2R)-2,3-dihydroxy-3-methylbutanoate + NADP(+) = (2S)-2-acetolactate + NADPH + H(+). It carries out the reaction (2R,3R)-2,3-dihydroxy-3-methylpentanoate + NADP(+) = (S)-2-ethyl-2-hydroxy-3-oxobutanoate + NADPH + H(+). It functions in the pathway amino-acid biosynthesis; L-isoleucine biosynthesis; L-isoleucine from 2-oxobutanoate: step 2/4. Its pathway is amino-acid biosynthesis; L-valine biosynthesis; L-valine from pyruvate: step 2/4. Functionally, involved in the biosynthesis of branched-chain amino acids (BCAA). Catalyzes an alkyl-migration followed by a ketol-acid reduction of (S)-2-acetolactate (S2AL) to yield (R)-2,3-dihydroxy-isovalerate. In the isomerase reaction, S2AL is rearranged via a Mg-dependent methyl migration to produce 3-hydroxy-3-methyl-2-ketobutyrate (HMKB). In the reductase reaction, this 2-ketoacid undergoes a metal-dependent reduction by NADPH to yield (R)-2,3-dihydroxy-isovalerate. In Bacillus pumilus (strain SAFR-032), this protein is Ketol-acid reductoisomerase (NADP(+)).